The chain runs to 527 residues: MHDQEAANGGETATNPISSLDVPTPPATTIPTLSSPAPLLRPAIPGARSAGARTPRLGLAIPPSPNVKPVGGAPGRPPLPTLHLATPMGSSVTPHEQPPGRPSIVTQQGQSASGGSESSAAHSRSGSFGPLDGRTSNPTSAGSQYSALSFASHFGIGSTRPQGTPDPASAVGSIYSERSDGGAGMDKDGNLKGLENFDKLTIDKARTADVEDLDVEGWKIASMEKRIVELGGLGEGAGGAVTRCKLTGGKTVFALKVITANPDPDVKKQIMRELDFNIQCASEHICRYYGAFEDPSTATISIAMEFCEGGSLDSIYKEVKRLGGRTGEKVLGKIAEGVLRGLTYLNSKKIIHRDIKPSNILLCRNGDVKLCDFGVSGDFGTKGEANTFIGTSYYMAPERITGQSYTITSDVWSTGVTLLEVAQHRFPFPADGTEMAPRAGLIDLLTYIVRQPIPKLKDEPSAQISWSENFKYFIECCLEKDPQRRASPWRMLEHPWMVDMKSKRVNMTRYLAQVWGWDDKGEAKPAE.

Disordered regions lie at residues 1-143 and 156-189; these read MHDQ…SAGS and IGST…DKDG. Residues 107 to 129 are compositionally biased toward low complexity; sequence QQGQSASGGSESSAAHSRSGSFG. Positions 134–143 are enriched in polar residues; sequence RTSNPTSAGS. Over residues 177-189 the composition is skewed to basic and acidic residues; sequence ERSDGGAGMDKDG. The Protein kinase domain maps to 227 to 497; the sequence is IVELGGLGEG…PWRMLEHPWM (271 aa). ATP contacts are provided by residues 233 to 241 and Lys256; that span reads LGEGAGGAV.

The protein belongs to the protein kinase superfamily. STE Ser/Thr protein kinase family. MAP kinase kinase subfamily. Interacts with the adapter protein MST50.

The enzyme catalyses L-seryl-[protein] + ATP = O-phospho-L-seryl-[protein] + ADP + H(+). The catalysed reaction is L-threonyl-[protein] + ATP = O-phospho-L-threonyl-[protein] + ADP + H(+). Functionally, mitogen-activated protein kinase kinase; part of the MCK1-MKK2-MPS1 MAP kinase (MAPK) signal transduction cascade that is essential for appressorium formation, penetration and invasive growth. Beside its role in pathogenesis, the MPS1 cascade is active in conidiation and cellular stress responses. Targets downstream of the the MPS1-MAPK pathway include transcription factors MIG1 and SWI6, as well as GSK1 and MPG1. In Pyricularia oryzae (strain 70-15 / ATCC MYA-4617 / FGSC 8958) (Rice blast fungus), this protein is Mitogen-activated protein kinase kinae MKK2.